Here is a 287-residue protein sequence, read N- to C-terminus: Protease HtpX (287 aa).

2 helical membrane-spanning segments follow: residues 4-24 (IFLLIATNMAILLVASIVMSI) and 33-53 (GGLLVFAAIFGFGGAFISLAI). Histidine 139 contacts Zn(2+). The active site involves glutamate 140. A Zn(2+)-binding site is contributed by histidine 143. Helical transmembrane passes span 154-174 (LIQGVVNTFVIFAARVVAGII) and 195-215 (AVVFVLDMLFGILASMIVAYF). Glutamate 220 serves as a coordination point for Zn(2+).

It belongs to the peptidase M48B family. It depends on Zn(2+) as a cofactor.

Its subcellular location is the cell inner membrane. This chain is Protease HtpX, found in Shewanella pealeana (strain ATCC 700345 / ANG-SQ1).